The primary structure comprises 511 residues: Glucans biosynthesis protein G (511 aa).

A signal peptide spans Met1 to Ala22.

This sequence belongs to the OpgD/OpgG family.

The protein localises to the periplasm. Its pathway is glycan metabolism; osmoregulated periplasmic glucan (OPG) biosynthesis. Its function is as follows. Involved in the biosynthesis of osmoregulated periplasmic glucans (OPGs). The polypeptide is Glucans biosynthesis protein G (Escherichia coli O81 (strain ED1a)).